Consider the following 316-residue polypeptide: UPF0324 membrane protein SO_4708 (316 aa).

9 consecutive transmembrane segments (helical) span residues Leu-61–Glu-80, Asn-85–Leu-107, Gly-114–Val-136, Ala-146–Leu-168, Phe-175–Gly-197, Ile-207–Phe-226, Leu-233–Leu-252, Leu-262–Ile-281, and Pro-293–Phe-315.

Belongs to the UPF0324 family.

The protein resides in the cell membrane. The protein is UPF0324 membrane protein SO_4708 of Shewanella oneidensis (strain ATCC 700550 / JCM 31522 / CIP 106686 / LMG 19005 / NCIMB 14063 / MR-1).